Here is a 1166-residue protein sequence, read N- to C-terminus: DEAD-box ATP-dependent RNA helicase 42 (1166 aa).

Composition is skewed to basic and acidic residues over residues 1-12 (MEVEKSKYRSED) and 21-45 (DLKK…EKRR). Residues 1 to 460 (MEVEKSKYRS…NDDDPSLDED (460 aa)) form a disordered region. A coiled-coil region spans residues 14 to 95 (DVVEEEADLK…KDRVKRRSER (82 aa)). Over residues 59–70 (SEDDYDRDDDEE) the composition is skewed to acidic residues. The segment covering 80–95 (ERRRRDKDRVKRRSER) has biased composition (basic residues). Residues 101–110 (SEDDVEEEDE) show a composition bias toward acidic residues. The span at 111 to 206 (RDKRRVNEKE…RERERSREVG (96 aa)) shows a compositional bias: basic and acidic residues. Residues 130–302 (RGKDRKRDRE…KRKKEEAESE (173 aa)) are a coiled coil. Position 210 is a phosphoserine (S210). The span at 224–314 (EGGERKEKER…GDADGNEPKA (91 aa)) shows a compositional bias: basic and acidic residues. The residue at position 324 (S324) is a Phosphoserine. Basic and acidic residues-rich tracts occupy residues 344–357 (ETKP…KMVD) and 416–426 (MNGKESGDRPK). The short motif at 529–557 (KFWHQTGLTSKILDTMKKLNYEKPMPIQT) is the Q motif element. A Helicase ATP-binding domain is found at 560–738 (LPIIMSGRDC…RKVLNKPVEI (179 aa)). 573-580 (AKTGSGKT) lines the ATP pocket. The DEAD box motif lies at 686-689 (DEAD). The region spanning 749–910 (DITQLVEVRP…PVPDDLKALA (162 aa)) is the Helicase C-terminal domain.

It belongs to the DEAD box helicase family. DDX46/PRP5 subfamily.

Its subcellular location is the nucleus. The enzyme catalyses ATP + H2O = ADP + phosphate + H(+). Helicase required for pre-mRNA splicing, cold-responsive gene regulation and cold tolerance. The sequence is that of DEAD-box ATP-dependent RNA helicase 42 (RH42) from Arabidopsis thaliana (Mouse-ear cress).